Consider the following 252-residue polypeptide: Accessory gland protein Acp32CD (252 aa).

The signal sequence occupies residues 1–19 (MWRMRMRLLTGYLVLLALG). The interval 42–252 (PDGEGGTGVD…GAKEDDYEEM (211 aa)) is disordered. Residues 44 to 69 (GEGGTGVDGGGGGAGGGAAGPGGGTG) show a composition bias toward gly residues. Composition is skewed to basic and acidic residues over residues 104-122 (AIGK…DSKD), 142-153 (SDSKDAKDRQDK), 159-171 (QEGK…HHSS), and 209-225 (NGAR…KEVA).

In terms of tissue distribution, seminal fluid.

Its subcellular location is the secreted. Functionally, responsible for physiological and behavioral changes in mated female flies. The protein is Accessory gland protein Acp32CD (Acp32CD) of Drosophila melanogaster (Fruit fly).